The following is a 393-amino-acid chain: Phosphopentomutase (393 aa).

The Mn(2+) site is built by D14, D287, H292, D328, H329, and H340.

Belongs to the phosphopentomutase family. Mn(2+) serves as cofactor.

The protein localises to the cytoplasm. The enzyme catalyses 2-deoxy-alpha-D-ribose 1-phosphate = 2-deoxy-D-ribose 5-phosphate. The catalysed reaction is alpha-D-ribose 1-phosphate = D-ribose 5-phosphate. The protein operates within carbohydrate degradation; 2-deoxy-D-ribose 1-phosphate degradation; D-glyceraldehyde 3-phosphate and acetaldehyde from 2-deoxy-alpha-D-ribose 1-phosphate: step 1/2. In terms of biological role, isomerase that catalyzes the conversion of deoxy-ribose 1-phosphate (dRib-1-P) and ribose 1-phosphate (Rib-1-P) to deoxy-ribose 5-phosphate (dRib-5-P) and ribose 5-phosphate (Rib-5-P), respectively. This Geobacillus stearothermophilus (Bacillus stearothermophilus) protein is Phosphopentomutase.